The primary structure comprises 117 residues: Ribonuclease P protein component (117 aa).

This sequence belongs to the RnpA family. As to quaternary structure, consists of a catalytic RNA component (M1 or rnpB) and a protein subunit.

The enzyme catalyses Endonucleolytic cleavage of RNA, removing 5'-extranucleotides from tRNA precursor.. Functionally, RNaseP catalyzes the removal of the 5'-leader sequence from pre-tRNA to produce the mature 5'-terminus. It can also cleave other RNA substrates such as 4.5S RNA. The protein component plays an auxiliary but essential role in vivo by binding to the 5'-leader sequence and broadening the substrate specificity of the ribozyme. The polypeptide is Ribonuclease P protein component (Thermotoga petrophila (strain ATCC BAA-488 / DSM 13995 / JCM 10881 / RKU-1)).